Reading from the N-terminus, the 584-residue chain is Actin-binding protein IPP (584 aa).

Positions 37-104 (CDVQLQVGQE…IYTGIVNIGV (68 aa)) constitute a BTB domain. Kelch repeat units follow at residues 289–343 (YLYA…VLGG), 344–390 (MVYA…VCYG), 391–437 (AIYA…EMQG), 439–485 (IYVI…ALND), 487–533 (IYSV…AVNG), and 535–583 (LYVS…GVAV).

It localises to the cytoplasm. The protein localises to the cytoskeleton. In terms of biological role, may play a role in organizing the actin cytoskeleton. The sequence is that of Actin-binding protein IPP (IPP) from Homo sapiens (Human).